The sequence spans 580 residues: XK-related protein 7 (580 aa).

The span at 1–22 (MAAKSDGAAAVAGPGPEGPAGA) shows a compositional bias: low complexity. The tract at residues 1-28 (MAAKSDGAAAVAGPGPEGPAGADRGGAG) is disordered. The next 8 membrane-spanning stretches (helical) occupy residues 59–79 (WVLCALLVFFSDGATDLWLAA), 89–109 (YFGLTLLFVLLPSLVVQLLSF), 260–280 (LLTALSISASLVSLAWTLASY), 303–323 (VLWHLFTIAARTLAFALFASV), 326–346 (LYFGIFIVAHWCIMTFWVIQG), 355–375 (WEEIIYNMVVGIIYIFCWFNV), 384–404 (VTLYYCIVLLENAALTGFWYS), and 415–435 (LILVCVVASSFALGIFFMCVY). A disordered region spans residues 470 to 516 (TSPPRSLPRTTGAERDGAAVGGERAGTPTPPVFQVRPGLPPTPVARP).

The protein belongs to the XK family.

It is found in the cell membrane. This chain is XK-related protein 7, found in Rattus norvegicus (Rat).